Reading from the N-terminus, the 405-residue chain is Argininosuccinate synthase (405 aa).

ATP is bound by residues 10-18 (AYSGGLDTS) and Ala-37. Residues Tyr-88 and Ser-93 each contribute to the L-citrulline site. Residue Gly-118 participates in ATP binding. The L-aspartate site is built by Thr-120, Asn-124, and Asp-125. Asn-124 contacts L-citrulline. 5 residues coordinate L-citrulline: Arg-128, Ser-179, Ser-188, Glu-264, and Tyr-276.

The protein belongs to the argininosuccinate synthase family. Type 1 subfamily. Homotetramer.

It is found in the cytoplasm. The enzyme catalyses L-citrulline + L-aspartate + ATP = 2-(N(omega)-L-arginino)succinate + AMP + diphosphate + H(+). Its pathway is amino-acid biosynthesis; L-arginine biosynthesis; L-arginine from L-ornithine and carbamoyl phosphate: step 2/3. This Stutzerimonas stutzeri (strain A1501) (Pseudomonas stutzeri) protein is Argininosuccinate synthase.